Consider the following 145-residue polypeptide: Ribosomal protein uL24-like (145 aa).

2 disordered regions span residues 1–21 (MKFNPFVTSDRSKNRKRHFNA) and 122–145 (KAKSRQVGKEKGKYKEELIEKMQE). Glycyl lysine isopeptide (Lys-Gly) (interchain with G-Cter in SUMO2) cross-links involve residues lysine 136 and lysine 142.

Belongs to the universal ribosomal protein uL24 family.

This is Ribosomal protein uL24-like (RPL26L1) from Homo sapiens (Human).